Reading from the N-terminus, the 183-residue chain is Archaemetzincin (183 aa).

His-131 provides a ligand contact to Zn(2+). The active-site Proton acceptor is Glu-132. 6 residues coordinate Zn(2+): His-135, His-141, Cys-142, Cys-147, Cys-166, and Cys-169.

This sequence belongs to the peptidase M54 family. In terms of assembly, monomer. Requires Zn(2+) as cofactor.

Probable zinc metalloprotease whose natural substrate is unknown. This is Archaemetzincin from Saccharolobus islandicus (strain Y.N.15.51 / Yellowstone #2) (Sulfolobus islandicus).